The following is a 465-amino-acid chain: Deoxyguanosinetriphosphate triphosphohydrolase-like protein (465 aa).

A disordered region spans residues 1–22; the sequence is MKWDKLLNDKRRRESGVTRSKN. In terms of domain architecture, HD spans 63–252; sequence RLTHSMEVST…LEVADDIAYL (190 aa).

It belongs to the dGTPase family. Type 3 subfamily.

The chain is Deoxyguanosinetriphosphate triphosphohydrolase-like protein from Listeria innocua serovar 6a (strain ATCC BAA-680 / CLIP 11262).